The chain runs to 156 residues: Ribonuclease ageritin (156 aa).

The N-terminal stretch at 1–21 is a signal peptide; sequence MSESSTFTTAVVPEGEGVAPM. Residue histidine 98 is part of the active site. 2 N-linked (GlcNAc...) asparagine glycosylation sites follow: asparagine 100 and asparagine 139.

Belongs to the ribotoxin-like family. Monomer. It depends on Mg(2+) as a cofactor.

It localises to the vacuole lumen. The enzyme catalyses a 28S rRNA containing guanosine-adenosine pair + H2O = an [RNA fragment]-3'-adenosine-3'-phosphate + a 5'-a hydroxy-guanosine-3'-[RNA fragment].. In contrast to most ribotoxins, activity is completely inhibited by EDTA. Its function is as follows. Fungal ribonuclease involved in fungal defense. Highly specific and highly toxic fungal endonuclease that cleaves a single phosphodiester bond in the 28S RNA of eukaryotic ribosomes at a universally conserved GAGA tetraloop of the sarcin-ricin loop (SRL). The damage of the SRL inhibits the binding of translation elongation factors and halts protein biosynthesis, ultimately resulting in the death of the target cells. Shows antitumor activity. Exerts cytotoxicity and induces apoptosis towards rat glial cells and human glioma cells, and also displays some activity towards human neurolastoma cell lines. Shows a strong entomotoxicity against Aedes aegypti larvae, yet no nematotoxicity against nematodes. The sequence is that of Ribonuclease ageritin from Cyclocybe aegerita (Black poplar mushroom).